We begin with the raw amino-acid sequence, 1180 residues long: Pyruvate carboxylase 2 (1180 aa).

Position 2 is an N-acetylserine (S2). The Biotin carboxylation domain maps to 19–471 (EKNKILVANR…WTTFIDDTPQ (453 aa)). Positions 137, 221, and 256 each coordinate ATP. Residues 141–338 (RHLAARANVP…IVSAQIQIAA (198 aa)) enclose the ATP-grasp domain. R313 is an active-site residue. Residues 558 to 825 (TLLMDTTWRD…DTGINVEHVR (268 aa)) enclose the Pyruvate carboxyltransferase domain. Substrate contacts are provided by residues 566–570 (RDAHQ) and R639. D567 contributes to the a divalent metal cation binding site. 3 residues coordinate a divalent metal cation: K735, H765, and H767. Position 735 is an N6-carboxylysine (K735). Position 899 (T899) interacts with substrate. The Biotinyl-binding domain maps to 1095-1170 (KADVHDTHQI…DASDLLVVLE (76 aa)). N6-biotinyllysine is present on K1136.

In terms of assembly, homotetramer. Biotin is required as a cofactor. It depends on Zn(2+) as a cofactor.

Its subcellular location is the cytoplasm. The catalysed reaction is hydrogencarbonate + pyruvate + ATP = oxaloacetate + ADP + phosphate + H(+). It participates in carbohydrate biosynthesis; gluconeogenesis. Functionally, pyruvate carboxylase catalyzes a 2-step reaction, involving the ATP-dependent carboxylation of the covalently attached biotin in the first step and the transfer of the carboxyl group to pyruvate in the second. This chain is Pyruvate carboxylase 2 (PYC2), found in Saccharomyces cerevisiae (strain ATCC 204508 / S288c) (Baker's yeast).